The sequence spans 69 residues: uncharacterized protein (69 aa).

The N-terminal stretch at 1 to 16 (MSLGLIFALLLTHAAA) is a signal peptide.

This is an uncharacterized protein from Archaeoglobus fulgidus (strain ATCC 49558 / DSM 4304 / JCM 9628 / NBRC 100126 / VC-16).